A 107-amino-acid chain; its full sequence is Guanylate cyclase activator 2B (107 aa).

The N-terminal stretch at Met1–Gly21 is a signal peptide. Residues Val22–Ala92 constitute a propeptide that is removed on maturation. Disulfide bonds link Cys63–Cys76, Cys96–Cys104, and Cys99–Cys107.

The protein belongs to the guanylin family.

It is found in the secreted. In terms of biological role, endogenous activator of intestinal guanylate cyclase. It stimulates this enzyme through the same receptor binding region as the heat-stable enterotoxins. May be a potent physiological regulator of intestinal fluid and electrolyte transport. May be an autocrine/paracrine regulator of intestinal salt and water transport. This chain is Guanylate cyclase activator 2B (GUCA2B), found in Notomys alexis (Spinifex hopping mouse).